Consider the following 376-residue polypeptide: C2H2 type master regulator of conidiophore development brlA (376 aa).

Low complexity predominate over residues 20–29; sequence TSFSSASSSA. 3 disordered regions span residues 20–47, 197–229, and 241–267; these read TSFSSASSSAYDPFTPSSRRSTPNELSL, HHHHHNHHQHHHAQQSPMGQHFQLHSNTGASPN, and EAQRKTSELQRAQIRESRKRAGKPESG. A compositionally biased stretch (polar residues) spans 34-44; the sequence is TPSSRRSTPNE. Basic residues predominate over residues 197–209; sequence HHHHHNHHQHHHA. A compositionally biased stretch (polar residues) spans 219-229; sequence QLHSNTGASPN. Residues 241-256 show a composition bias toward basic and acidic residues; it reads EAQRKTSELQRAQIRE. The segment at 277–301 adopts a C2H2-type 1; degenerate zinc-finger fold; the sequence is CKCDYPGCNKAFRRNEHLKRHKQTF. The C2H2-type 2 zinc-finger motif lies at 309-332; it reads FSCEFCGKDQFNRQDNLNNHRKLH. A disordered region spans residues 351–376; that stretch reads IIEHEERSRKRRAPPKSKAEKRDYDF. Over residues 367–376 the composition is skewed to basic and acidic residues; sequence SKAEKRDYDF.

The protein resides in the nucleus. BrlA, abaA and wetA are pivotal regulators of conidiophore development and conidium maturation. They act individually and together to regulate their own expression and that of numerous other sporulation-specific genes. Binds promoters of target genes at brlA response elements (BREs) containing the conserved sequence 5'-(C/A)(A/G)AGGG(G/A)-3'. This is C2H2 type master regulator of conidiophore development brlA from Hapsidospora chrysogena (Acremonium chrysogenum).